A 515-amino-acid polypeptide reads, in one-letter code: tRNA-2-methylthio-N(6)-dimethylallyladenosine synthase (515 aa).

The 116-residue stretch at Lys-25–His-140 folds into the MTTase N-terminal domain. [4Fe-4S] cluster contacts are provided by Cys-34, Cys-69, Cys-103, Cys-177, Cys-181, and Cys-184. The 231-residue stretch at Arg-163–Glu-393 folds into the Radical SAM core domain. The region spanning Ala-396–Gly-466 is the TRAM domain. The tract at residues Asp-482–Ala-515 is disordered. Residues Gly-490 to Gly-506 are compositionally biased toward low complexity.

The protein belongs to the methylthiotransferase family. MiaB subfamily. Monomer. The cofactor is [4Fe-4S] cluster.

It is found in the cytoplasm. It carries out the reaction N(6)-dimethylallyladenosine(37) in tRNA + (sulfur carrier)-SH + AH2 + 2 S-adenosyl-L-methionine = 2-methylsulfanyl-N(6)-dimethylallyladenosine(37) in tRNA + (sulfur carrier)-H + 5'-deoxyadenosine + L-methionine + A + S-adenosyl-L-homocysteine + 2 H(+). In terms of biological role, catalyzes the methylthiolation of N6-(dimethylallyl)adenosine (i(6)A), leading to the formation of 2-methylthio-N6-(dimethylallyl)adenosine (ms(2)i(6)A) at position 37 in tRNAs that read codons beginning with uridine. The protein is tRNA-2-methylthio-N(6)-dimethylallyladenosine synthase of Paenarthrobacter aurescens (strain TC1).